Consider the following 258-residue polypeptide: MILNGKTRAGKPGFPWLVFLHGFSGDSREWQDVGAQLPDYPQLHLDLPGHGDSANIAVAGFDEVSQLLADTLVSYNILKFWLVGYSLGGRIAMFHACQHPAGLIGLIVEGGHPGLHDEPTRKARAESDAQWAERFRREPLENVFSAWYQQPVFAALQETERDALVALRSQNNGAALGAMLQATSLAQQPDLRAALRAHDYPFHYVYGEHDDKFGAIATELTAQRHVIPNAGHNAHRENPAAVAACLAQILRLRIKDIP.

This sequence belongs to the AB hydrolase superfamily. MenH family. As to quaternary structure, monomer.

The catalysed reaction is 5-enolpyruvoyl-6-hydroxy-2-succinyl-cyclohex-3-ene-1-carboxylate = (1R,6R)-6-hydroxy-2-succinyl-cyclohexa-2,4-diene-1-carboxylate + pyruvate. It functions in the pathway quinol/quinone metabolism; 1,4-dihydroxy-2-naphthoate biosynthesis; 1,4-dihydroxy-2-naphthoate from chorismate: step 3/7. The protein operates within quinol/quinone metabolism; menaquinone biosynthesis. Functionally, catalyzes a proton abstraction reaction that results in 2,5-elimination of pyruvate from 2-succinyl-5-enolpyruvyl-6-hydroxy-3-cyclohexene-1-carboxylate (SEPHCHC) and the formation of 2-succinyl-6-hydroxy-2,4-cyclohexadiene-1-carboxylate (SHCHC). The chain is 2-succinyl-6-hydroxy-2,4-cyclohexadiene-1-carboxylate synthase from Enterobacter sp. (strain 638).